The sequence spans 145 residues: Ribosome-binding factor A (145 aa).

Basic and acidic residues predominate over residues 122-132; the sequence is KVQRDLESAPR. Positions 122 to 145 are disordered; the sequence is KVQRDLESAPREDDEGEPASSSRD.

Belongs to the RbfA family. In terms of assembly, monomer. Binds 30S ribosomal subunits, but not 50S ribosomal subunits or 70S ribosomes.

Its subcellular location is the cytoplasm. In terms of biological role, one of several proteins that assist in the late maturation steps of the functional core of the 30S ribosomal subunit. Associates with free 30S ribosomal subunits (but not with 30S subunits that are part of 70S ribosomes or polysomes). Required for efficient processing of 16S rRNA. May interact with the 5'-terminal helix region of 16S rRNA. This Methylorubrum extorquens (strain CM4 / NCIMB 13688) (Methylobacterium extorquens) protein is Ribosome-binding factor A.